The primary structure comprises 438 residues: Phosphoribosylamine--glycine ligase (438 aa).

Residues 108-316 (REFMERNDIP…LVEIAEGIVK (209 aa)) form the ATP-grasp domain. 135–194 (IDEYGKPVVVKPLGLTGGKGVKVVGYQLKDNEEAKEYAEYLIKKDGKVLIEERTDGVEFT) serves as a coordination point for ATP. Residues Q274, E286, and N288 each coordinate Mg(2+). 3 residues coordinate Mn(2+): Q274, E286, and N288.

This sequence belongs to the GARS family. Requires Mg(2+) as cofactor. It depends on Mn(2+) as a cofactor.

The enzyme catalyses 5-phospho-beta-D-ribosylamine + glycine + ATP = N(1)-(5-phospho-beta-D-ribosyl)glycinamide + ADP + phosphate + H(+). It participates in purine metabolism; IMP biosynthesis via de novo pathway; N(1)-(5-phospho-D-ribosyl)glycinamide from 5-phospho-alpha-D-ribose 1-diphosphate: step 2/2. This chain is Phosphoribosylamine--glycine ligase, found in Pyrococcus abyssi (strain GE5 / Orsay).